The primary structure comprises 359 residues: Membrane-bound lytic murein transglycosylase C (359 aa).

The signal sequence occupies residues 1-16 (MKKYLALALIAPLLIS). The N-palmitoyl cysteine moiety is linked to residue C17. A lipid anchor (S-diacylglycerol cysteine) is attached at C17.

The protein belongs to the transglycosylase Slt family.

The protein localises to the cell outer membrane. The catalysed reaction is Exolytic cleavage of the (1-&gt;4)-beta-glycosidic linkage between N-acetylmuramic acid (MurNAc) and N-acetylglucosamine (GlcNAc) residues in peptidoglycan, from either the reducing or the non-reducing ends of the peptidoglycan chains, with concomitant formation of a 1,6-anhydrobond in the MurNAc residue.. In terms of biological role, murein-degrading enzyme. May play a role in recycling of muropeptides during cell elongation and/or cell division. This is Membrane-bound lytic murein transglycosylase C from Escherichia coli (strain SE11).